Consider the following 166-residue polypeptide: Putative universal stress protein SE_1385 (166 aa).

The protein belongs to the universal stress protein A family.

It is found in the cytoplasm. This is Putative universal stress protein SE_1385 from Staphylococcus epidermidis (strain ATCC 12228 / FDA PCI 1200).